A 301-amino-acid chain; its full sequence is Homoserine O-acetyltransferase (301 aa).

C142 acts as the Acyl-thioester intermediate in catalysis. The substrate site is built by K163 and S192. The active-site Proton acceptor is the H235. E237 is a catalytic residue. R249 provides a ligand contact to substrate.

Belongs to the MetA family.

The protein localises to the cytoplasm. It carries out the reaction L-homoserine + acetyl-CoA = O-acetyl-L-homoserine + CoA. Its pathway is amino-acid biosynthesis; L-methionine biosynthesis via de novo pathway; O-acetyl-L-homoserine from L-homoserine: step 1/1. Transfers an acetyl group from acetyl-CoA to L-homoserine, forming acetyl-L-homoserine. The protein is Homoserine O-acetyltransferase of Bacillus cereus (strain B4264).